Here is a 694-residue protein sequence, read N- to C-terminus: Phosphatase and actin regulator 4 (694 aa).

2 disordered regions span residues 1–354 (MEDP…SPLV) and 375–405 (QDISQQEDQKTEVPKKIQDQSFGESHIPSRL). A compositionally biased stretch (basic residues) spans 45 to 54 (KPWKWRKKKS). Over residues 55–84 (SDKFKETSEVLERKISMRKPREELVKRGVL) the composition is skewed to basic and acidic residues. Residues 63–88 (EVLERKISMRKPREELVKRGVLLEDP) form an RPEL 1 repeat. A phosphoserine mark is found at Ser116, Ser118, Ser129, and Ser145. Low complexity-rich tracts occupy residues 184–209 (AGSTARSVSSTSGSTTVTSAATTAAT) and 231–249 (TLPAAPASANTAATTTAPA). Over residues 250-259 (KQPPIPPPKP) the composition is skewed to pro residues. Residues Ser264, Ser285, Ser335, and Ser337 each carry the phosphoserine modification. The span at 329–352 (LIIPPSSPSPPLPTHIPPEPPRSP) shows a compositional bias: pro residues. Positions 381–392 (EDQKTEVPKKIQ) are enriched in basic and acidic residues. Ser420 is modified (phosphoserine). At Thr425 the chain carries Phosphothreonine. Ser436, Ser446, Ser457, Ser503, Ser505, Ser549, and Ser582 each carry phosphoserine. The tract at residues 467-562 (VPDDEEEEQT…TNLNSWPRKS (96 aa)) is disordered. The span at 546 to 559 (SRPSEPETNLNSWP) shows a compositional bias: polar residues. RPEL repeat units follow at residues 575–600 (NTLIRRLSQRPTAEELEQRNILQPKN) and 613–638 (RRLTRKLSQRPTVAELLARKILRFNE). The segment at 589–608 (ELEQRNILQPKNEADRQAEK) is disordered. Residue Ser620 is modified to Phosphoserine.

It belongs to the phosphatase and actin regulator family. As to quaternary structure, binds PPP1CA and actin.

The protein localises to the cytoplasm. Its subcellular location is the cell projection. It localises to the lamellipodium. Functionally, regulator of protein phosphatase 1 (PP1) required for neural tube and optic fissure closure, and enteric neural crest cell (ENCCs) migration during development. Acts as an activator of PP1 by interacting with PPP1CA and preventing phosphorylation of PPP1CA at 'Thr-320'. During neural tube closure, localizes to the ventral neural tube and activates PP1, leading to down-regulate cell proliferation within cranial neural tissue and the neural retina. Also acts as a regulator of migration of enteric neural crest cells (ENCCs) by activating PP1, leading to dephosphorylation and subsequent activation of cofilin (COF1 or COF2) and repression of the integrin signaling through the RHO/ROCK pathway. The polypeptide is Phosphatase and actin regulator 4 (Phactr4) (Mus musculus (Mouse)).